The sequence spans 56 residues: MAVPKKKTSKSKRNQRHAVWKAKAATAAQRAMSIGKSVLSGRAQGFVYPVADDSED.

It belongs to the bacterial ribosomal protein bL32 family.

The protein is Large ribosomal subunit protein bL32 of Synechococcus sp. (strain CC9311).